The sequence spans 725 residues: Exocyst complex component 8 (725 aa).

S19 carries the phosphoserine modification. The disordered stretch occupies residues 116 to 159 (AASGGEEGGGGAGGRDQLRGQTGFFPSPGGASRDGSGPGEEGKQ). Gly residues predominate over residues 120 to 129 (GEEGGGGAGG). Positions 182-282 (YLVYNGDLVE…WLEVLEETKR (101 aa)) constitute a PH domain. A disordered region spans residues 285 to 322 (SEKRRREQEEAAAPRGPPQVTPKASNPFEDEDDDEPTV). Positions 312-322 (FEDEDDDEPTV) are enriched in acidic residues.

It belongs to the EXO84 family. In terms of assembly, the exocyst complex is composed of EXOC1, EXOC2, EXOC3, EXOC4, EXOC5, EXOC6, EXOC7 and EXOC8. Interacts (via PH domain) with GTP-bound RALA and RALB. Interacts with SH3BP1; required for the localization of both SH3BP1 and the exocyst to the leading edge of migrating cells.

The protein localises to the cytoplasm. It localises to the perinuclear region. Its subcellular location is the cell projection. The protein resides in the growth cone. Component of the exocyst complex involved in the docking of exocytic vesicles with fusion sites on the plasma membrane. This is Exocyst complex component 8 (EXOC8) from Bos taurus (Bovine).